Reading from the N-terminus, the 284-residue chain is D-tagatose-1,6-bisphosphate aldolase subunit GatY (284 aa).

The active-site Proton donor is the Asp-82. Zn(2+) is bound by residues His-83 and His-180. A dihydroxyacetone phosphate-binding site is contributed by Gly-181. His-208 lines the Zn(2+) pocket. Residues 209 to 211 and 230 to 233 contribute to the dihydroxyacetone phosphate site; these read GAS and NVAT.

It belongs to the class II fructose-bisphosphate aldolase family. TagBP aldolase GatY subfamily. In terms of assembly, forms a complex with GatZ. Requires Zn(2+) as cofactor.

The catalysed reaction is D-tagatofuranose 1,6-bisphosphate = D-glyceraldehyde 3-phosphate + dihydroxyacetone phosphate. Its pathway is carbohydrate metabolism; D-tagatose 6-phosphate degradation; D-glyceraldehyde 3-phosphate and glycerone phosphate from D-tagatose 6-phosphate: step 2/2. Functionally, catalytic subunit of the tagatose-1,6-bisphosphate aldolase GatYZ, which catalyzes the reversible aldol condensation of dihydroxyacetone phosphate (DHAP or glycerone-phosphate) with glyceraldehyde 3-phosphate (G3P) to produce tagatose 1,6-bisphosphate (TBP). Requires GatZ subunit for full activity and stability. Is involved in the catabolism of galactitol. This Salmonella newport (strain SL254) protein is D-tagatose-1,6-bisphosphate aldolase subunit GatY.